The sequence spans 510 residues: ATP synthase subunit alpha (510 aa).

Residue 169–176 (GDRQTGKT) participates in ATP binding.

Belongs to the ATPase alpha/beta chains family. In terms of assembly, F-type ATPases have 2 components, CF(1) - the catalytic core - and CF(0) - the membrane proton channel. CF(1) has five subunits: alpha(3), beta(3), gamma(1), delta(1), epsilon(1). CF(0) has three main subunits: a(1), b(2) and c(9-12). The alpha and beta chains form an alternating ring which encloses part of the gamma chain. CF(1) is attached to CF(0) by a central stalk formed by the gamma and epsilon chains, while a peripheral stalk is formed by the delta and b chains.

It is found in the cell inner membrane. The catalysed reaction is ATP + H2O + 4 H(+)(in) = ADP + phosphate + 5 H(+)(out). Functionally, produces ATP from ADP in the presence of a proton gradient across the membrane. The alpha chain is a regulatory subunit. The protein is ATP synthase subunit alpha of Rickettsia peacockii (strain Rustic).